Here is a 96-residue protein sequence, read N- to C-terminus: Co-chaperonin GroES (96 aa).

The protein belongs to the GroES chaperonin family. As to quaternary structure, heptamer of 7 subunits arranged in a ring. Interacts with the chaperonin GroEL.

It is found in the cytoplasm. Functionally, together with the chaperonin GroEL, plays an essential role in assisting protein folding. The GroEL-GroES system forms a nano-cage that allows encapsulation of the non-native substrate proteins and provides a physical environment optimized to promote and accelerate protein folding. GroES binds to the apical surface of the GroEL ring, thereby capping the opening of the GroEL channel. The polypeptide is Co-chaperonin GroES (Polaromonas naphthalenivorans (strain CJ2)).